The following is a 425-amino-acid chain: 3-isopropylmalate dehydratase large subunit (425 aa).

3 residues coordinate [4Fe-4S] cluster: Cys306, Cys366, and Cys369.

This sequence belongs to the aconitase/IPM isomerase family. LeuC type 2 subfamily. In terms of assembly, heterodimer of LeuC and LeuD. It depends on [4Fe-4S] cluster as a cofactor.

It carries out the reaction (2R,3S)-3-isopropylmalate = (2S)-2-isopropylmalate. Its pathway is amino-acid biosynthesis; L-leucine biosynthesis; L-leucine from 3-methyl-2-oxobutanoate: step 2/4. Catalyzes the isomerization between 2-isopropylmalate and 3-isopropylmalate, via the formation of 2-isopropylmaleate. This chain is 3-isopropylmalate dehydratase large subunit, found in Nautilia profundicola (strain ATCC BAA-1463 / DSM 18972 / AmH).